The chain runs to 137 residues: Histone H2B.1, sperm (137 aa).

Residues Met-1 to Arg-43 are disordered. 3 consecutive short sequence motifs (SPKK motif) follow at residues Ser-6–Lys-9, Ser-11–Lys-14, and Ser-16–Lys-19. Over residues Pro-7–Arg-43 the composition is skewed to basic residues. 2 positions are modified to phosphoserine: Ser-11 and Ser-16. O-linked (GlcNAc) serine glycosylation occurs at Ser-124. Lys-132 is covalently cross-linked (Glycyl lysine isopeptide (Lys-Gly) (interchain with G-Cter in ubiquitin)).

Belongs to the histone H2B family. As to quaternary structure, the nucleosome is a histone octamer containing two molecules each of H2A, H2B, H3 and H4 assembled in one H3-H4 heterotetramer and two H2A-H2B heterodimers. The octamer wraps approximately 147 bp of DNA. Monoubiquitination of Lys-132 gives a specific tag for epigenetic transcriptional activation and is also prerequisite for histone H3 'Lys-4' and 'Lys-79' methylation. Post-translationally, phosphorylated on SPKK motifs 2 and 3; which may regulate DNA binding. Dephosphorylated during maturation of spermatids to mature sperm and rephosphorylated at fertilization. In terms of processing, glcNAcylation at Ser-124 promotes monoubiquitination of Lys-132. It fluctuates in response to extracellular glucose, and associates with transcribed genes.

Its subcellular location is the nucleus. It localises to the chromosome. Its function is as follows. Core component of nucleosome. Nucleosomes wrap and compact DNA into chromatin, limiting DNA accessibility to the cellular machineries which require DNA as a template. Histones thereby play a central role in transcription regulation, DNA repair, DNA replication and chromosomal stability. DNA accessibility is regulated via a complex set of post-translational modifications of histones, also called histone code, and nucleosome remodeling. This is Histone H2B.1, sperm from Psammechinus miliaris (Green sea urchin).